We begin with the raw amino-acid sequence, 452 residues long: Cobyrinate a,c-diamide synthase (452 aa).

One can recognise a GATase cobBQ-type domain in the interval 248–441 (RVAYALDAAF…LHIHFYQNPA (194 aa)). Cys-330 acts as the Nucleophile in catalysis.

This sequence belongs to the CobB/CbiA family. Requires Mg(2+) as cofactor.

The enzyme catalyses cob(II)yrinate + 2 L-glutamine + 2 ATP + 2 H2O = cob(II)yrinate a,c diamide + 2 L-glutamate + 2 ADP + 2 phosphate + 2 H(+). It functions in the pathway cofactor biosynthesis; adenosylcobalamin biosynthesis; cob(II)yrinate a,c-diamide from sirohydrochlorin (anaerobic route): step 10/10. In terms of biological role, catalyzes the ATP-dependent amidation of the two carboxylate groups at positions a and c of cobyrinate, using either L-glutamine or ammonia as the nitrogen source. The sequence is that of Cobyrinate a,c-diamide synthase from Listeria innocua serovar 6a (strain ATCC BAA-680 / CLIP 11262).